Reading from the N-terminus, the 790-residue chain is Sodium- and chloride-dependent glycine transporter 2 (790 aa).

Residues 1 to 39 (MDYVNVVDGSKKTMNSPEGAAPGLIGATGITNPTPDNDL) are disordered. At 1–192 (MDYVNVVDGS…ARGNWSNKLD (192 aa)) the chain is on the cytoplasmic side. Transmembrane regions (helical) follow at residues 193 to 213 (FILSMVGYAVGLGNVWRFPYL), 220 to 240 (GAFLIPYLTMLALAGLPIFYL), and 264 to 284 (GCGIAMLIISVLIAIYYNIIM). Residues Gly-199, Ala-201, Val-202, and Asn-206 each contribute to the Na(+) site. Over 285 to 387 (CYTIFYLFAS…GIEYPGEIRW (103 aa)) the chain is Extracellular. An intrachain disulfide couples Cys-304 to Cys-313. Residues Asn-336, Asn-346, Asn-351, and Asn-357 are each glycosylated (N-linked (GlcNAc...) asparagine). The next 3 membrane-spanning stretches (helical) occupy residues 388–408 (PLVFCLFLAWIIVYASLAKGI), 427–447 (VILLFRGVTLPGAGDGIWWFI), and 463–483 (AATQIFFSLSAAWGGLITLSS). Residues Ser-470 and Asn-502 each coordinate Na(+). The next 6 helical transmembrane spans lie at 504–524 (ATSIFAGFVIFSVIGFMAHIL), 556–576 (WAIIFFLMLLTLGLDTMFATI), 597–617 (LFTLVCCVAFFIMGFPMITQG), 631–651 (SYSLVIIAIFELVGISYIYGL), 672–692 (ICWAFVTPTILTFILGFSFYQ), and 708–728 (MVMGWLMLACSVIWIPIMFVI). 2 residues coordinate Na(+): Leu-567 and Asp-570. Over 729–790 (KMFLAPGTFI…PKDFELGTQC (62 aa)) the chain is Cytoplasmic.

Belongs to the sodium:neurotransmitter symporter (SNF) (TC 2.A.22) family. SLC6A5 subfamily. As to expression, first expressed in late neurula stages in the anterior spinal cord, where expression intensifies through the tailbud stages, and by hatching, expression is seen in the hindbrain. During late hatching stages, expression extends along most of the length of the spinal cord, mildly intensifies in the hindbrain, and appears in localized regions of the lateral forebrain and medial midbrain. By the swimming tadpole stage, weak expression appears in the anterior hindbrain, with stronger expression in the posterior, postmitotic neurons.

The protein localises to the cell membrane. It carries out the reaction glycine(out) + chloride(out) + 3 Na(+)(out) = glycine(in) + chloride(in) + 3 Na(+)(in). Sodium- and chloride-dependent glycine transporter. Terminates the action of glycine by its high affinity sodium-dependent reuptake into presynaptic terminals. May be responsible for the termination of neurotransmission at strychnine-sensitive glycinergic synapses. This is Sodium- and chloride-dependent glycine transporter 2 from Xenopus laevis (African clawed frog).